Here is a 415-residue protein sequence, read N- to C-terminus: Serine--tRNA ligase (415 aa).

Threonine 230–glutamate 232 is a binding site for L-serine. Arginine 261–glutamate 263 serves as a coordination point for ATP. Glutamate 284 provides a ligand contact to L-serine. Position 348-351 (glutamate 348–serine 351) interacts with ATP. Serine 382 provides a ligand contact to L-serine.

This sequence belongs to the class-II aminoacyl-tRNA synthetase family. Type-1 seryl-tRNA synthetase subfamily. In terms of assembly, homodimer. The tRNA molecule binds across the dimer.

It localises to the cytoplasm. It catalyses the reaction tRNA(Ser) + L-serine + ATP = L-seryl-tRNA(Ser) + AMP + diphosphate + H(+). The enzyme catalyses tRNA(Sec) + L-serine + ATP = L-seryl-tRNA(Sec) + AMP + diphosphate + H(+). The protein operates within aminoacyl-tRNA biosynthesis; selenocysteinyl-tRNA(Sec) biosynthesis; L-seryl-tRNA(Sec) from L-serine and tRNA(Sec): step 1/1. In terms of biological role, catalyzes the attachment of serine to tRNA(Ser). Is also able to aminoacylate tRNA(Sec) with serine, to form the misacylated tRNA L-seryl-tRNA(Sec), which will be further converted into selenocysteinyl-tRNA(Sec). The protein is Serine--tRNA ligase of Sulfurimonas denitrificans (strain ATCC 33889 / DSM 1251) (Thiomicrospira denitrificans (strain ATCC 33889 / DSM 1251)).